A 309-amino-acid chain; its full sequence is tRNA pseudouridine synthase B (309 aa).

Asp51 serves as the catalytic Nucleophile.

The protein belongs to the pseudouridine synthase TruB family. Type 1 subfamily.

The catalysed reaction is uridine(55) in tRNA = pseudouridine(55) in tRNA. In terms of biological role, responsible for synthesis of pseudouridine from uracil-55 in the psi GC loop of transfer RNAs. This Coxiella burnetii (strain RSA 493 / Nine Mile phase I) protein is tRNA pseudouridine synthase B.